The following is a 297-amino-acid chain: Phosphoribosylaminoimidazole-succinocarboxamide synthase (297 aa).

Belongs to the SAICAR synthetase family.

It catalyses the reaction 5-amino-1-(5-phospho-D-ribosyl)imidazole-4-carboxylate + L-aspartate + ATP = (2S)-2-[5-amino-1-(5-phospho-beta-D-ribosyl)imidazole-4-carboxamido]succinate + ADP + phosphate + 2 H(+). It functions in the pathway purine metabolism; IMP biosynthesis via de novo pathway; 5-amino-1-(5-phospho-D-ribosyl)imidazole-4-carboxamide from 5-amino-1-(5-phospho-D-ribosyl)imidazole-4-carboxylate: step 1/2. The chain is Phosphoribosylaminoimidazole-succinocarboxamide synthase from Rhodococcus erythropolis (strain PR4 / NBRC 100887).